Here is a 376-residue protein sequence, read N- to C-terminus: Alpha-centractin (376 aa).

M1 carries the N-acetylmethionine modification.

It belongs to the actin family. ARP1 subfamily. As to quaternary structure, part of the ACTR1A/ACTB filament around which the dynactin complex is built. The filament contains 8 copies of ACTR1A and 1 ACTB. Interacts with dynein and adapters such as BICD2. Interacts with BCCIP (isoform 2/alpha).

It localises to the cytoplasm. The protein resides in the cytoskeleton. Its subcellular location is the microtubule organizing center. The protein localises to the centrosome. It is found in the cell cortex. Part of the ACTR1A/ACTB filament around which the dynactin complex is built. The dynactin multiprotein complex activates the molecular motor dynein for ultra-processive transport along microtubules. The sequence is that of Alpha-centractin (ACTR1A) from Canis lupus familiaris (Dog).